The sequence spans 143 residues: D-aminoacyl-tRNA deacylase (143 aa).

Positions 135-136 match the Gly-cisPro motif, important for rejection of L-amino acids motif; it reads GP.

The protein belongs to the DTD family. As to quaternary structure, homodimer.

It is found in the cytoplasm. It carries out the reaction glycyl-tRNA(Ala) + H2O = tRNA(Ala) + glycine + H(+). The catalysed reaction is a D-aminoacyl-tRNA + H2O = a tRNA + a D-alpha-amino acid + H(+). An aminoacyl-tRNA editing enzyme that deacylates mischarged D-aminoacyl-tRNAs. Also deacylates mischarged glycyl-tRNA(Ala), protecting cells against glycine mischarging by AlaRS. Acts via tRNA-based rather than protein-based catalysis; rejects L-amino acids rather than detecting D-amino acids in the active site. By recycling D-aminoacyl-tRNA to D-amino acids and free tRNA molecules, this enzyme counteracts the toxicity associated with the formation of D-aminoacyl-tRNA entities in vivo and helps enforce protein L-homochirality. The sequence is that of D-aminoacyl-tRNA deacylase from Nocardia farcinica (strain IFM 10152).